A 355-amino-acid polypeptide reads, in one-letter code: Uroporphyrinogen decarboxylase (355 aa).

Substrate-binding positions include 27–31 (RQAGR), aspartate 78, tyrosine 155, serine 210, and histidine 328.

This sequence belongs to the uroporphyrinogen decarboxylase family. Homodimer.

It localises to the cytoplasm. It carries out the reaction uroporphyrinogen III + 4 H(+) = coproporphyrinogen III + 4 CO2. Its pathway is porphyrin-containing compound metabolism; protoporphyrin-IX biosynthesis; coproporphyrinogen-III from 5-aminolevulinate: step 4/4. In terms of biological role, catalyzes the decarboxylation of four acetate groups of uroporphyrinogen-III to yield coproporphyrinogen-III. The protein is Uroporphyrinogen decarboxylase of Pseudomonas fluorescens (strain ATCC BAA-477 / NRRL B-23932 / Pf-5).